A 643-amino-acid chain; its full sequence is E3 ubiquitin-protein ligase AMFR (643 aa).

The disordered stretch occupies residues 39 to 67 (PEAGPGEPDQLTASLQPEPPAPARPSAGG). The next 6 helical transmembrane spans lie at 82–102 (LFVW…AKLI), 122–142 (FWNF…VQTV), 145–165 (VVMW…VQLC), 186–206 (VLSL…VCSI), 215–235 (TLAF…HVIL), and 276–296 (HIHM…VIFM). The RING-type zinc-finger motif lies at 341 to 379 (CAICWDSMQAARKLPCGHLFHNSCLRSWLEQDTSCPTCR). Residues 429-449 (IASWLPSFSVEVMHTTNILGI) form a helical membrane-spanning segment. Residues 456–498 (QLNAMAHQIQEMFPQVPYHLVLQDLQLTRSVEITTDNILEGRI) enclose the CUE domain. 2 disordered regions span residues 504-579 (TQRS…DERQ) and 596-624 (RFLN…PVTL). Phosphoserine occurs at positions 516, 523, and 542. Residues 548–563 (TLDFGEVEVEPSEVED) show a composition bias toward acidic residues. The span at 564–579 (FEARGSRFSKSADERQ) shows a compositional bias: basic and acidic residues. The VCP/p97-interacting motif (VIM) stretch occupies residues 622 to 640 (VTLRRRMLAAAAERRLQKQ).

In terms of assembly, interacts with RNF5. Also forms an ERAD complex containing VCP/p97, NGLY1; PSMC1; SAKS1 and RAD23B required for coupling retrotranslocation, ubiquitination and deglycosylation. Interacts with DERL1. Interacts (through a region distinct from the RING finger) with UBE2G2/UBC7. Component of the VCP/p97-AMFR/gp78 complex that enhances VCP/p97 binding to polyubiquitinated proteins for their degradation by the endoplasmic reticulum-associated degradation (ERAD) pathway. Interacts (via the VIM) with VCP/p97. Interacts (via its membrane domain) with INSIG1; the interaction initiates the sterol-mediated ubiquitination and degradation of HMGCR by the ERAD pathway. Interacts with AUP1, UBE2G2 and RNF139/TRC8; interaction with AUP1 facilitates interaction of AMFR with ubiquitin-conjugating enzyme UBE2G2 and ubiquitin ligase RNF139, leading to sterol-induced ubiquitination of HMGCR and its subsequent proteasomal degradation. Interacts with BAG6. Interacts with USP13 (via UBA 2 domain); the interaction is direct. Interacts with LMBR1L. Interacts with UBAC2 and CTNNB1. Interacts with C18orf32. As to quaternary structure, (Microbial infection) Interacts with Staphylococcus aureus HIgB; this interaction regulates AMFR-mediated inflammation by promoting TAB3 ubiquitination to promote TAB3-TAK1 complex formation. Post-translationally, palmitoylation of the RING-type zing finger by ZDHHC6 promotes localization to the peripheral endoplasmic reticulum. Widely expressed.

Its subcellular location is the endoplasmic reticulum membrane. The catalysed reaction is [E2 ubiquitin-conjugating enzyme]-S-ubiquitinyl-L-cysteine + [acceptor protein]-L-cysteine = [E2 ubiquitin-conjugating enzyme]-L-cysteine + [acceptor protein]-S-ubiquitinyl-L-cysteine.. It participates in protein modification; protein ubiquitination. Its function is as follows. E3 ubiquitin-protein ligase that mediates the polyubiquitination of lysine and cysteine residues on target proteins, such as CD3D, CYP3A4, CFTR, INSIG1, SOAT2/ACAT2 and APOB for proteasomal degradation. Component of a VCP/p97-AMFR/gp78 complex that participates in the final step of endoplasmic reticulum-associated degradation (ERAD). The VCP/p97-AMFR/gp78 complex is involved in the sterol-accelerated ERAD degradation of HMGCR through binding to the HMGCR-INSIG1 complex at the ER membrane. In addition, interaction of AMFR with AUP1 facilitates interaction of AMFR with ubiquitin-conjugating enzyme UBE2G2 and ubiquitin ligase RNF139, leading to sterol-induced HMGCR ubiquitination. The ubiquitinated HMGCR is then released from the ER into the cytosol for subsequent destruction. In addition to ubiquitination on lysine residues, catalyzes ubiquitination on cysteine residues: together with INSIG1, mediates polyubiquitination of SOAT2/ACAT2 at 'Cys-277', leading to its degradation when the lipid levels are low. Catalyzes ubiquitination and subsequent degradation of INSIG1 when cells are depleted of sterols. Mediates polyubiquitination of INSIG2 at 'Cys-215' in some tissues, leading to its degradation. Also regulates ERAD through the ubiquitination of UBL4A a component of the BAG6/BAT3 complex. Also acts as a scaffold protein to assemble a complex that couples ubiquitination, retranslocation and deglycosylation. Mediates tumor invasion and metastasis as a receptor for the GPI/autocrine motility factor. In association with LMBR1L and UBAC2, negatively regulates the canonical Wnt signaling pathway in the lymphocytes by promoting the ubiquitin-mediated degradation of CTNNB1 and Wnt receptors FZD6 and LRP6. Regulates NF-kappa-B and MAPK signaling pathways by mediating 'Lys-27'-linked polyubiquitination of TAB3 and promoting subsequent TAK1/MAP3K7 activation. Required for proper lipid homeostasis. This is E3 ubiquitin-protein ligase AMFR from Homo sapiens (Human).